Reading from the N-terminus, the 331-residue chain is Phosphate acyltransferase (331 aa).

It belongs to the PlsX family. Homodimer. Probably interacts with PlsY.

It is found in the cytoplasm. The catalysed reaction is a fatty acyl-[ACP] + phosphate = an acyl phosphate + holo-[ACP]. It functions in the pathway lipid metabolism; phospholipid metabolism. Functionally, catalyzes the reversible formation of acyl-phosphate (acyl-PO(4)) from acyl-[acyl-carrier-protein] (acyl-ACP). This enzyme utilizes acyl-ACP as fatty acyl donor, but not acyl-CoA. The chain is Phosphate acyltransferase from Malacoplasma penetrans (strain HF-2) (Mycoplasma penetrans).